The sequence spans 1824 residues: Afadin (1824 aa).

The Ras-associating 1 domain maps to 39 to 133; sequence FHGVMRFYFQ…GRFVLKNEND (95 aa). The disordered stretch occupies residues 128 to 194; the sequence is LKNENDAIPP…DRPFQGEDVE (67 aa). A coiled-coil region spans residues 146 to 185; that stretch reads EKQEKEGVIQNFKRTLSKKEKKEKKKREKEALRQASDKDD. Residues 160 to 172 are compositionally biased toward basic residues; sequence TLSKKEKKEKKKR. The segment covering 173–189 has biased composition (basic and acidic residues); it reads EKEALRQASDKDDRPFQ. Phosphoserine is present on residues serine 216, serine 246, and serine 256. The Ras-associating 2 domain occupies 246–348; that stretch reads SGGTLRIYAD…LVFQLKRRPP (103 aa). Positions 349–371 are enriched in basic and acidic residues; it reads DHIPKKTKKHLEGKTPKGKERAD. The tract at residues 349-378 is disordered; the sequence is DHIPKKTKKHLEGKTPKGKERADGSGYGST. Phosphoserine is present on residues serine 391 and serine 424. Positions 426 to 492 constitute an FHA domain; sequence TEVGTEKLDD…LQSGMKVQFG (67 aa). A phosphoserine mark is found at serine 512, serine 557, serine 562, serine 589, and serine 655. The disordered stretch occupies residues 534 to 595; sequence FDLGGDIHSG…RQESRTQDAS (62 aa). A compositionally biased stretch (basic and acidic residues) spans 580–591; sequence QQPDYRRQESRT. Positions 668-908 constitute a Dilute domain; that stretch reads NKMVSMMEGV…IENVVTVAEN (241 aa). In terms of domain architecture, PDZ spans 1007 to 1093; the sequence is IITVTLKKQN…VVTLEVAKQG (87 aa). 9 positions are modified to phosphoserine: serine 1083, serine 1107, serine 1126, serine 1140, serine 1143, serine 1172, serine 1173, serine 1182, and serine 1199. Residues 1107 to 1223 are disordered; that stretch reads SPMMQRISDR…PRPEAYPIPT (117 aa). The segment covering 1113–1128 has biased composition (basic and acidic residues); the sequence is ISDRRGSGKPRPKSEG. Over residues 1132–1143 the composition is skewed to polar residues; the sequence is YNNSTQNGSPES. The span at 1152–1172 shows a compositional bias: basic and acidic residues; sequence SEPKKLPGDDRLMKNRADHRS. Residues 1190–1210 show a composition bias toward polar residues; the sequence is ASGTTAKITSVSTGNLCTEEQ. Threonine 1211 and threonine 1232 each carry phosphothreonine. 3 disordered regions span residues 1235-1473, 1501-1528, and 1569-1824; these read ASKS…LQRP, SKEE…EKQQ, and RLQE…LNTK. Residue serine 1238 is modified to Phosphoserine. Basic and acidic residues-rich tracts occupy residues 1252–1262 and 1274–1302; these read YEEKPHMHTDS and RSQE…KSDS. Position 1275 is a phosphoserine (serine 1275). A compositionally biased stretch (low complexity) spans 1309-1318; that stretch reads SSSLDSSTSS. Over residues 1325–1337 the composition is skewed to polar residues; that stretch reads SSKSVTPASTLTK. Serine 1328 bears the Phosphoserine mark. Threonine 1330 bears the Phosphothreonine mark. Residues 1345-1356 are compositionally biased toward low complexity; the sequence is TPAAIPATPVAV. The span at 1364–1373 shows a compositional bias: pro residues; that stretch reads LPPPPPPPPV. Residues 1407–1441 show a composition bias toward basic and acidic residues; sequence AERRKREEHQRWYEKEKARLEEERERKRREQERKL. The stretch at 1408–1448 forms a coiled coil; it reads ERRKREEHQRWYEKEKARLEEERERKRREQERKLGQMRTQS. Phosphoserine is present on residues serine 1501 and serine 1512. Residues 1515–1528 show a composition bias toward basic and acidic residues; sequence PWKRDAKEKLEKQQ. Positions 1523 to 1667 form a coiled coil; it reads KLEKQQQMHI…SRLEAERRRQ (145 aa). Residues 1578–1589 are compositionally biased toward acidic residues; that stretch reads EDDEEEEDDDVD. Basic and acidic residues predominate over residues 1597–1677; that stretch reads LEAERRARLQ…HDEAARRLLE (81 aa). Positions 1694-1709 are enriched in pro residues; the sequence is PPSPSPAPGAPPPPPQ. Serine 1696, serine 1721, serine 1774, serine 1779, and serine 1799 each carry phosphoserine. The segment covering 1762-1776 has biased composition (basic and acidic residues); it reads DACRDAKEKRSKSQD. Lysine 1807 carries the post-translational modification N6-acetyllysine. Positions 1813 to 1824 are enriched in basic and acidic residues; sequence KLTELENELNTK.

As to quaternary structure, homodimer. Interacts with F-actin, nectin and NECTIN3. Essential for the association of nectin and E-cadherin. Isoform 1/s-afadin does not interact with F-actin. Interacts with ZO-1 and occludin, but probably in an indirect manner. Interacts with RIT1 and RIT2. Interacts with NRXN1 and BCR. Interacts with ADAM10; the interaction locks ADAM10 at adherens junctions following ADAM10 recruitment to adherens junctions by TSPAN33.

The protein resides in the cell junction. It localises to the adherens junction. Its function is as follows. Belongs to an adhesion system, probably together with the E-cadherin-catenin system, which plays a role in the organization of homotypic, interneuronal and heterotypic cell-cell adherens junctions (AJs). Nectin- and actin-filament-binding protein that connects nectin to the actin cytoskeleton. May play a key role in the organization of epithelial structures of the embryonic ectoderm. Essential for the organization of adherens junctions. The protein is Afadin of Homo sapiens (Human).